A 174-amino-acid chain; its full sequence is UPF0316 protein lin1888 (174 aa).

The next 3 helical transmembrane spans lie at 4-24 (GIFI…IYTV), 36-56 (LAAL…SLVL), and 62-82 (IANV…GMKI).

Belongs to the UPF0316 family.

It localises to the cell membrane. The protein is UPF0316 protein lin1888 of Listeria innocua serovar 6a (strain ATCC BAA-680 / CLIP 11262).